We begin with the raw amino-acid sequence, 382 residues long: Non-structural maintenance of chromosomes element 4 homolog A (382 aa).

Residues 1–21 show a composition bias toward basic and acidic residues; it reads MSGDSSGRRPEGRGRGRDPHR. Residues 1 to 80 form a disordered region; that stretch reads MSGDSSGRRP…ASLEEETDPS (80 aa). The span at 31-41 shows a compositional bias: low complexity; that stretch reads RSPLSPGSRRG. The span at 42 to 55 shows a compositional bias: basic and acidic residues; the sequence is AAPERREAPERPGL. Acidic residues predominate over residues 56–78; the sequence is EDTEPSDSGDEMIDPASLEEETD. Thr342 carries the phosphothreonine modification. A Phosphoserine modification is found at Ser374.

This sequence belongs to the NSE4 family. Component of the SMC5-SMC6 complex which consists at least of SMC5, SMC6, NSMCE2, NSMCE1, NSMCE4A or EID3 and NSMCE3. NSMCE1, NSMCE4A or EID3 and NSMCE3 probably form a subcomplex that bridges the head domains of the SMC5:SMC6 heterodimer. Interacts with NSMCE3.

It is found in the nucleus. Its subcellular location is the chromosome. It localises to the telomere. Component of the SMC5-SMC6 complex, a complex involved in repair of DNA double-strand breaks by homologous recombination. The complex may promote sister chromatid homologous recombination by recruiting the SMC1-SMC3 cohesin complex to double-strand breaks. The complex is required for telomere maintenance via recombination and mediates sumoylation of shelterin complex (telosome) components. In Bos taurus (Bovine), this protein is Non-structural maintenance of chromosomes element 4 homolog A (NSMCE4A).